Here is a 690-residue protein sequence, read N- to C-terminus: Xylosyl- and glucuronyltransferase LARGE2 (690 aa).

The Cytoplasmic portion of the chain corresponds to 1 to 7 (MLPRGRP). The chain crosses the membrane as a helical; Signal-anchor for type II membrane protein span at residues 8–28 (RALGAALLLLLLLVVGFFLFG). Topologically, residues 29–690 (RDPEYGLGTT…TALQQSRSRA (662 aa)) are lumenal. N-linked (GlcNAc...) asparagine glycosylation is found at Asn-50 and Asn-77. Residues 67–342 (LHVAIVCAGY…FLGFDGKLLC (276 aa)) are xylosyltransferase activity. 2 residues coordinate Mn(2+): Asp-171 and Asp-173. A glycan (N-linked (GlcNAc...) asparagine) is linked at Asn-201. The segment at 343-686 (RELFGCPNQF…LKYLTALQQS (344 aa)) is glucuronyltransferase activity. 2 residues coordinate Mn(2+): Asp-491 and Asp-493.

The protein in the C-terminal section; belongs to the glycosyltransferase 49 family. In the N-terminal section; belongs to the glycosyltransferase 8 family. In terms of assembly, interacts with B4GAT1. Requires Mn(2+) as cofactor.

The protein localises to the golgi apparatus membrane. The catalysed reaction is 3-O-[beta-D-GlcA-(1-&gt;3)-beta-D-Xyl-(1-&gt;4)-Rib-ol-P-Rib-ol-P-3-beta-D-GalNAc-(1-&gt;3)-beta-D-GlcNAc-(1-&gt;4)-(O-6-P-alpha-D-Man)]-Thr-[protein] + UDP-alpha-D-xylose = 3-O-[alpha-D-Xyl-(1-&gt;3)-beta-D-GlcA-(1-&gt;4)-beta-D-Xyl-(1-&gt;4)-Rib-ol-P-Rib-ol-P-3-beta-D-GalNAc-(1-&gt;3)-beta-D-GlcNAc-(1-&gt;4)-(O-6-P-alpha-D-Man)]-Thr-[protein] + UDP + H(+). It catalyses the reaction 3-O-{(1-&gt;[3)-alpha-D-Xyl-(1-&gt;3)-beta-D-GlcA-(1-&gt;](n)-4)-beta-D-Xyl-(1-&gt;4)-Rib-ol-P-Rib-ol-P-3-beta-D-GalNAc-(1-&gt;3)-beta-D-GlcNAc-(1-&gt;4)-O-6-P-alpha-D-Man}-L-Thr-[protein] + UDP-alpha-D-glucuronate = 3-O-{beta-D-GlcA-(1-&gt;[3)-alpha-D-Xyl-(1-&gt;3)-beta-D-GlcA-(1-&gt;](n)-4)-beta-D-Xyl-(1-&gt;4)-Rib-ol-P-Rib-ol-P-3-beta-D-GalNAc-(1-&gt;3)-beta-D-GlcNAc-(1-&gt;4)-O-6-P-alpha-D-Man}-L-Thr-[protein] + UDP + H(+). The enzyme catalyses 3-O-{beta-D-GlcA-(1-&gt;[3)-alpha-D-Xyl-(1-&gt;3)-beta-D-GlcA-(1-&gt;](n)-4)-beta-D-Xyl-(1-&gt;4)-Rib-ol-P-Rib-ol-P-3-beta-D-GalNAc-(1-&gt;3)-beta-D-GlcNAc-(1-&gt;4)-O-6-P-alpha-D-Man}-L-Thr-[protein] + UDP-alpha-D-xylose = 3-O-{(1-&gt;[3)-alpha-D-Xyl-(1-&gt;3)-beta-D-GlcA-(1-&gt;](n+1)-4)-beta-D-Xyl-(1-&gt;4)-Rib-ol-P-Rib-ol-P-3-beta-D-GalNAc-(1-&gt;3)-beta-D-GlcNAc-(1-&gt;4)-O-6-P-alpha-D-Man}-L-Thr-[protein] + UDP + H(+). The protein operates within protein modification; protein glycosylation. Bifunctional glycosyltransferase with both alpha-1,3-xylosyltransferase and beta-1,3-glucuronyltransferase activities involved in the maturation of alpha-dystroglycan (DAG1) by glycosylation leading to DAG1 binding to laminin G-like domain-containing extracellular proteins with high affinity and in a phosphorylated-O-mannosyl trisaccharide dependent manner. Elongates the glucuronyl-beta-1,4-xylose-beta disaccharide primer structure by adding repeating units [-3-Xylose-alpha-1,3-GlcA-beta-1-] to produce a heteropolysaccharide. Supports the maturation of DAG1 more effectively than LARGE1. In addition, can modify both heparan sulfate (HS)- and chondroitin/dermatan sulfate (CS/DS)-proteoglycans (PGs), namely GPC4, with a glycosaminoglycan (GAG)-like polysaccharide composed of xylose and glucuronic acid to confer laminin binding. The polypeptide is Xylosyl- and glucuronyltransferase LARGE2 (Rattus norvegicus (Rat)).